The chain runs to 202 residues: Protein GrpE 1 (202 aa).

It belongs to the GrpE family. Homodimer.

The protein localises to the cytoplasm. In terms of biological role, participates actively in the response to hyperosmotic and heat shock by preventing the aggregation of stress-denatured proteins, in association with DnaK and GrpE. It is the nucleotide exchange factor for DnaK and may function as a thermosensor. Unfolded proteins bind initially to DnaJ; upon interaction with the DnaJ-bound protein, DnaK hydrolyzes its bound ATP, resulting in the formation of a stable complex. GrpE releases ADP from DnaK; ATP binding to DnaK triggers the release of the substrate protein, thus completing the reaction cycle. Several rounds of ATP-dependent interactions between DnaJ, DnaK and GrpE are required for fully efficient folding. The sequence is that of Protein GrpE 1 from Buchnera aphidicola subsp. Schizaphis graminum (strain Sg).